The sequence spans 831 residues: Glycerol-3-phosphate acyltransferase (831 aa).

The short motif at 304–309 is the HXXXXD motif element; the sequence is CHRSHM. Residues 801–831 are disordered; it reads VSMPAETSNQPEAPETPETPETPEPEGKTES.

The protein belongs to the GPAT/DAPAT family.

It is found in the cell inner membrane. It catalyses the reaction sn-glycerol 3-phosphate + an acyl-CoA = a 1-acyl-sn-glycero-3-phosphate + CoA. It functions in the pathway phospholipid metabolism; CDP-diacylglycerol biosynthesis; CDP-diacylglycerol from sn-glycerol 3-phosphate: step 1/3. This chain is Glycerol-3-phosphate acyltransferase, found in Yersinia pseudotuberculosis serotype IB (strain PB1/+).